The primary structure comprises 230 residues: Cytidylate kinase (230 aa).

12–20 (GPSGAGKGT) contacts ATP.

Belongs to the cytidylate kinase family. Type 1 subfamily.

Its subcellular location is the cytoplasm. The enzyme catalyses CMP + ATP = CDP + ADP. It catalyses the reaction dCMP + ATP = dCDP + ADP. The polypeptide is Cytidylate kinase (Shewanella loihica (strain ATCC BAA-1088 / PV-4)).